The primary structure comprises 586 residues: MEGANCSLKVNRHLLDPKFESYKLSLDPLPCYNVELDAAVAEVTLRDDQYTLDHMRAFGMYNYLHCNPWLPNSVFYIDQLKRVMSFTVTLDTAMGKPIEVFRFPRDLNACDNRLCSSMHFASAQWVTLSDGTGTLYIIRIGNQSDSLSGKWEIMFNQELGEPFIVVHSISSVRDELHVIDVLLLSVEKDESDIEGSGFHVCLEWVSAARAQNQENGEYEILKRRKLFGKSVPHYAAIEPLGNGVMMISYKPFRFIANEKDPHEPSEDEKMDEDNKREPLYNWQQTGEEVTLTFLLPEGKTKEDLNIKFLPGEIDISIKDQGTFLKGQLYSDVDCESSAWIMKEGRGVEVTLTKREPGCTWAELVIADKQGEYIADPAQTAAIAEKLMHLTSEDINPNPESEKPPCNAQELEECDIFLEDSTNLCRFDGTHLKATHVVNLGSNPYLFTFVATPELMPCFALRHDVDALLWQPVSEQPDNLWEHIATFNALGYVQASKQDKKFFTCAPNFSYSALCECVRRIFIYRQPTPVSTELYNRKEGRRVGQVAKQQVASLETTDPILGFQASNERLFVLTTKTLSVIKVNSTA.

The region spanning 275 to 364 (KREPLYNWQQ…EPGCTWAELV (90 aa)) is the CS domain.

Its subcellular location is the cytoplasm. It localises to the nucleus. The sequence is that of NudC domain-containing protein 1 from Xenopus laevis (African clawed frog).